Consider the following 359-residue polypeptide: 2-epi-5-epi-valiolone 7-kinase (359 aa).

The tract at residues 28-48 (GGLGEVHTTPSPGHARRPGAG) is disordered.

Belongs to the ROK (NagC/XylR) family.

The catalysed reaction is 2-epi-5-epi-valiolone + ATP = 2-epi-5-epi-valiolone 7-phosphate + ADP + H(+). Its function is as follows. Catalyzes the conversion of 2-epi-5-epi-valiolone to 2-epi-5-epi-valiolone 7-phosphate. Involved in the biosynthesis of the acarviose moiety of the alpha-glucosidase inhibitor acarbose. This chain is 2-epi-5-epi-valiolone 7-kinase, found in Actinoplanes sp. (strain ATCC 31044 / CBS 674.73 / SE50/110).